A 118-amino-acid polypeptide reads, in one-letter code: MKNRYIQQFEDAQLKDKTMPAFKAGDTLRLGITIKEGEKTRTQYFEGVCIAIRGNGVDKTFCVRKIGANNIGVEKIFPFYSESLASVEVLRVGRVRRAKLYYLRDRRGKAARIKEVRH.

It belongs to the bacterial ribosomal protein bL19 family.

This protein is located at the 30S-50S ribosomal subunit interface and may play a role in the structure and function of the aminoacyl-tRNA binding site. In Helicobacter pylori (strain HPAG1), this protein is Large ribosomal subunit protein bL19.